A 546-amino-acid chain; its full sequence is Chaperonin GroEL 2 (546 aa).

ATP contacts are provided by residues threonine 30–proline 33, lysine 51, aspartate 87–threonine 91, glycine 415, and aspartate 495. A disordered region spans residues aspartate 527–phenylalanine 546. Over residues glycine 535–phenylalanine 546 the composition is skewed to gly residues.

Belongs to the chaperonin (HSP60) family. Forms a cylinder of 14 subunits composed of two heptameric rings stacked back-to-back. Interacts with the co-chaperonin GroES.

Its subcellular location is the cytoplasm. It carries out the reaction ATP + H2O + a folded polypeptide = ADP + phosphate + an unfolded polypeptide.. Together with its co-chaperonin GroES, plays an essential role in assisting protein folding. The GroEL-GroES system forms a nano-cage that allows encapsulation of the non-native substrate proteins and provides a physical environment optimized to promote and accelerate protein folding. The protein is Chaperonin GroEL 2 of Burkholderia ambifaria (strain ATCC BAA-244 / DSM 16087 / CCUG 44356 / LMG 19182 / AMMD) (Burkholderia cepacia (strain AMMD)).